Reading from the N-terminus, the 1248-residue chain is Ankyrin repeat and sterile alpha motif domain-containing protein 1B (1248 aa).

ANK repeat units follow at residues 2-31 (GKDQELLEAARTGNVALVEKLLSGRKGGIL), 58-87 (SGYTALHHAALNGHKDIVLKLLQYEASTNV), 91-120 (KGYFPIHLAAWKGDVEIVKILIHHGPSHSR), 127-156 (ENETALHCAAQYGHSEVVAVLLEELTDPTI), 160-189 (KLETPLDLAALYGRLRVVKMIISAHPNLMS), 193-222 (RKHTPLHLAARNGHKAVVQVLLEAGMDVSC), and 225-254 (EKGSALHEAALFGKVDVVRVLLETGIDANI). The tract at residues 296–322 (EPVQEDATQETHISSPVESPSQKTKSE) is disordered. Residues 305–322 (ETHISSPVESPSQKTKSE) show a composition bias toward polar residues. A phosphoserine mark is found at serine 309, serine 310, serine 314, serine 353, and serine 364. Disordered regions lie at residues 367–400 (ELGKNGSQSVRTSSTINLSPGEVEEEDDDENTCG), 474–514 (APSP…PDTA), and 558–623 (SFTA…ENPF). Residues 371-384 (NGSQSVRTSSTINL) show a composition bias toward polar residues. Acidic residues predominate over residues 388–397 (EVEEEDDDEN). Threonine 503 is subject to Phosphothreonine. Residues serine 507 and serine 510 each carry the phosphoserine modification. The segment covering 558–575 (SFTASPPASPPTSSVGTT) has biased composition (low complexity). Basic and acidic residues predominate over residues 577–601 (VKNEGTNHTDDLSRQDDNDPPKEYD). Residue serine 738 is modified to Phosphoserine. Residues 749–777 (EKTSRVNWSESSTAEHSSKGNSERTPSFT) are disordered. Polar residues predominate over residues 753–763 (RVNWSESSTAE). Position 773 is a phosphothreonine (threonine 773). Serine 775 carries the phosphoserine modification. 2 SAM domains span residues 810-876 (CPVQ…LPKM) and 884-949 (YHPT…RLHD). Tyrosine 901 is modified (phosphotyrosine). Positions 935-938 (HRKR) match the Nuclear localization signal motif. The disordered stretch occupies residues 944 to 989 (GDRLHDDPPQKPPRSITLREPSGNHTPPQLSPSLSQSTYTTGGSLD). Residues 969-984 (TPPQLSPSLSQSTYTT) are compositionally biased toward low complexity. A Phosphoserine modification is found at serine 974. Residue tyrosine 1007 is modified to Phosphotyrosine. The 158-residue stretch at 1056–1213 (IFQSCDYKAF…SFENKPSKPI (158 aa)) folds into the PID domain. Residues 1197–1248 (HSSTLPESFENKPSKPIPKPRVSIRKSVDLLHASHTGQEPSERHTEEALRKF) form a disordered region. Positions 1236-1248 (PSERHTEEALRKF) are enriched in basic and acidic residues.

As to quaternary structure, isoform 3 interacts with DLG4. Interacts with EPHA8. Isoform 2 interacts with COIL. Isoform 4 interacts with APP and EPHA8. Isoform 6 interacts with EPHA8. Post-translationally, isoform 3 nuclear translocation requires an NMDAR-dependent proteolytic cleavage. As to expression, highly expressed in marrow from patients with pre-B ALL associated with the t(1;19) translocation. Strongly expressed in brain and testis. Expressed in fetal brain. Isoform 4 is highly expressed in brain (at protein level). Isoform 6 is expressed in brain and several cancer cell lines.

It is found in the cytoplasm. Its subcellular location is the nucleus. The protein resides in the postsynaptic density. The protein localises to the cell projection. It localises to the dendritic spine. It is found in the cajal body. Its function is as follows. Isoform 2 may participate in the regulation of nucleoplasmic coilin protein interactions in neuronal and transformed cells. In terms of biological role, isoform 3 can regulate global protein synthesis by altering nucleolar numbers. Functionally, isoform 4 may play a role as a modulator of APP processing. Overexpression can down-regulate APP processing. The protein is Ankyrin repeat and sterile alpha motif domain-containing protein 1B (ANKS1B) of Homo sapiens (Human).